Here is a 355-residue protein sequence, read N- to C-terminus: uncharacterized protein (355 aa).

An N-terminal signal peptide occupies residues 1-21 (MQKKVLFNDIVFVCFPITDNG). N-linked (GlcNAc...) asparagine; by host glycans are attached at residues asparagine 20, asparagine 78, asparagine 87, asparagine 156, asparagine 159, and asparagine 274. Residues 22–331 (SIIISDIGYS…SSTSFFSRYG (310 aa)) are Virion surface-facing. A disordered region spans residues 288 to 317 (GSKSTPNGPNGPTPTPSNGPNGPTPVPGIP). Positions 296-317 (PNGPTPTPSNGPNGPTPVPGIP) are enriched in pro residues. Asparagine 320 carries an N-linked (GlcNAc...) asparagine; by host glycan. A helical membrane pass occupies residues 332 to 352 (LWIIIAIILLIVIISAVGIYF). Topologically, residues 353–355 (YLR) are intravirion.

It is found in the host membrane. Its subcellular location is the virion. This is an uncharacterized protein from Acanthamoeba polyphaga mimivirus (APMV).